We begin with the raw amino-acid sequence, 172 residues long: Ubiquitin-conjugating enzyme E2 2 (172 aa).

Positions 4-150 constitute a UBC core domain; the sequence is PARRRLMRDF…VKETVEKSWE (147 aa). Cysteine 88 acts as the Glycyl thioester intermediate in catalysis. A Phosphoserine; by SGV1 modification is found at serine 120. The interval 145 to 172 is disordered; that stretch reads VEKSWEDDMDDMDDDDDDDDDDDDDEAD. Acidic residues predominate over residues 151–172; that stretch reads DDMDDMDDDDDDDDDDDDDEAD.

The protein belongs to the ubiquitin-conjugating enzyme family. As to quaternary structure, forms a heterodimer complexes with the E3 enzymes BRE1, RAD18 and UBR1. Also interacts with UBR2, RTF1, PAF1 and the RNA polymerase II hyperphosphorylated form. The interaction with RNA polymerase II is BRE1- and PAF1-dependent. The N-terminus is blocked.

The protein localises to the cytoplasm. The protein resides in the nucleus. It catalyses the reaction S-ubiquitinyl-[E1 ubiquitin-activating enzyme]-L-cysteine + [E2 ubiquitin-conjugating enzyme]-L-cysteine = [E1 ubiquitin-activating enzyme]-L-cysteine + S-ubiquitinyl-[E2 ubiquitin-conjugating enzyme]-L-cysteine.. Its pathway is protein modification; protein ubiquitination. E2 ubiquitin-conjugating enzyme that accepts ubiquitin from the ubiquitin-activating enzyme E1 and transfers it to a E3 ubiquitin-protein ligase. In association with the E3 enzyme BRE1 and LGE1, it plays a role in transcription regulation by catalyzing the monoubiquitination of histone H2B to form H2BK123ub1. H2BK123ub1 gives a specific tag for epigenetic transcriptional activation, elongation by RNA polymerase II, telomeric silencing, and is also a prerequisite for H3K4me and H3K79me formation. In association with the E3 enzyme RAD18, it catalyzes the monoubiquitination of POL30 'Lys-164', involved in postreplication repair of UV-damaged DNA. The RAD6/UBC2-RAD18 complex is also involved in prevention of spontaneous mutations caused by 7,8-dihydro-8-oxoguanine. In association with the E3 enzyme UBR1, is involved in N-end rule-dependent protein degradation. Also involved in sporulation. This chain is Ubiquitin-conjugating enzyme E2 2 (RAD6), found in Saccharomyces cerevisiae (strain ATCC 204508 / S288c) (Baker's yeast).